The sequence spans 200 residues: Imidazole glycerol phosphate synthase subunit HisH (200 aa).

Residues 3–200 form the Glutamine amidotransferase type-1 domain; it reads DVALIDAGGA…LRNFLEMSFP (198 aa). Cys-78 functions as the Nucleophile in the catalytic mechanism. Residues His-179 and Glu-181 contribute to the active site.

As to quaternary structure, heterodimer of HisH and HisF.

The protein localises to the cytoplasm. It carries out the reaction 5-[(5-phospho-1-deoxy-D-ribulos-1-ylimino)methylamino]-1-(5-phospho-beta-D-ribosyl)imidazole-4-carboxamide + L-glutamine = D-erythro-1-(imidazol-4-yl)glycerol 3-phosphate + 5-amino-1-(5-phospho-beta-D-ribosyl)imidazole-4-carboxamide + L-glutamate + H(+). The enzyme catalyses L-glutamine + H2O = L-glutamate + NH4(+). Its pathway is amino-acid biosynthesis; L-histidine biosynthesis; L-histidine from 5-phospho-alpha-D-ribose 1-diphosphate: step 5/9. In terms of biological role, IGPS catalyzes the conversion of PRFAR and glutamine to IGP, AICAR and glutamate. The HisH subunit catalyzes the hydrolysis of glutamine to glutamate and ammonia as part of the synthesis of IGP and AICAR. The resulting ammonia molecule is channeled to the active site of HisF. This chain is Imidazole glycerol phosphate synthase subunit HisH, found in Xanthomonas euvesicatoria pv. vesicatoria (strain 85-10) (Xanthomonas campestris pv. vesicatoria).